The sequence spans 276 residues: MPHRSLVCFAAPADKKAFMELVKTLRYRTEAPISDCSAALKETDGDMDAAMQVLRKRGAARAMKKGDRVTEHGFVVSCVGSTPASGAAIVTICSETDFAARNEHFQKVCVQARDQLCKLMDATNGAVLANPEEAVKHLSDVMAEELRVAIAVLGENMRVRSIAPLVPAPHMSERLLIGSYTHGSLNVDNVGRIVGLVALSQVRENEVVPKDVLTSVGRHFVATSGAEGNYAHQNFFGSETETVGKWLKQRGLKFSSSLVQEFGKEPVVHTAPEPHR.

Belongs to the EF-Ts family.

It localises to the mitochondrion. Functionally, associates with the EF-Tu.GDP complex and induces the exchange of GDP to GTP. It remains bound to the aminoacyl-tRNA.EF-Tu.GTP complex up to the GTP hydrolysis stage on the ribosome. The protein is Elongation factor Ts, mitochondrial of Leishmania infantum.